The chain runs to 296 residues: 4-hydroxybenzoate octaprenyltransferase (296 aa).

The next 8 helical transmembrane spans lie at proline 28–glycine 48, leucine 52–isoleucine 72, alanine 102–serine 122, threonine 145–alanine 167, serine 174–valine 196, methionine 219–phenylalanine 239, leucine 241–tryptophan 261, and phenylalanine 275–leucine 295.

The protein belongs to the UbiA prenyltransferase family. The cofactor is Mg(2+).

The protein resides in the cell inner membrane. The catalysed reaction is all-trans-octaprenyl diphosphate + 4-hydroxybenzoate = 4-hydroxy-3-(all-trans-octaprenyl)benzoate + diphosphate. The protein operates within cofactor biosynthesis; ubiquinone biosynthesis. Catalyzes the prenylation of para-hydroxybenzoate (PHB) with an all-trans polyprenyl group. Mediates the second step in the final reaction sequence of ubiquinone-8 (UQ-8) biosynthesis, which is the condensation of the polyisoprenoid side chain with PHB, generating the first membrane-bound Q intermediate 3-octaprenyl-4-hydroxybenzoate. The chain is 4-hydroxybenzoate octaprenyltransferase from Pseudomonas putida (strain W619).